The primary structure comprises 81 residues: Small ribosomal subunit protein bS16 (81 aa).

This sequence belongs to the bacterial ribosomal protein bS16 family.

This chain is Small ribosomal subunit protein bS16, found in Caldicellulosiruptor saccharolyticus (strain ATCC 43494 / DSM 8903 / Tp8T 6331).